We begin with the raw amino-acid sequence, 183 residues long: Nascent polypeptide-associated complex subunit beta (183 aa).

Positions 62 to 127 (GADDKKLQTT…GEEKELTELV (66 aa)) constitute an NAC-A/B domain. Residues 150–183 (QNMQKQAGTEGKKDEDEDDIPDLVEGENFESNVE) are disordered. Over residues 164-183 (EDEDDIPDLVEGENFESNVE) the composition is skewed to acidic residues.

This sequence belongs to the NAC-beta family. As to quaternary structure, part of the nascent polypeptide-associated complex (NAC), consisting of egd2 and egd1. NAC associates with ribosomes via egd1.

It is found in the cytoplasm. The protein resides in the nucleus. Component of the nascent polypeptide-associated complex (NAC), a dynamic component of the ribosomal exit tunnel, protecting the emerging polypeptides from interaction with other cytoplasmic proteins to ensure appropriate nascent protein targeting. The NAC complex also promotes mitochondrial protein import by enhancing productive ribosome interactions with the outer mitochondrial membrane and blocks the inappropriate interaction of ribosomes translating non-secretory nascent polypeptides with translocation sites in the membrane of the endoplasmic reticulum. EGD1 may act as a transcription factor that exert a negative effect on the expression of several genes that are transcribed by RNA polymerase II. The protein is Nascent polypeptide-associated complex subunit beta (egd1) of Neosartorya fischeri (strain ATCC 1020 / DSM 3700 / CBS 544.65 / FGSC A1164 / JCM 1740 / NRRL 181 / WB 181) (Aspergillus fischerianus).